A 206-amino-acid polypeptide reads, in one-letter code: Tetrathionate response regulatory protein TtrR (206 aa).

One can recognise a Response regulatory domain in the interval 3 to 117 (TIHLLDDDTA…PLQAALERAL (115 aa)). Aspartate 52 carries the 4-aspartylphosphate modification. The region spanning 134-194 (QQLTPKEREL…ELIRRFEKMA (61 aa)) is the HTH luxR-type domain. The segment at residues 153–172 (NREIAEAMNIAVRTVEVHRA) is a DNA-binding region (H-T-H motif).

In terms of processing, phosphorylated by TtrS.

Its subcellular location is the cytoplasm. Its function is as follows. Member of the two-component regulatory system TtrR/TtrS, which is required for synthesis of tetrathionate reductase. Positively regulates transcription of the ttrBCA operon. During mice infection, the ability to use tetrathionate as an electron acceptor is a growth advantage for S.typhimurium over the competing microbiota in the lumen of the inflamed gut. The chain is Tetrathionate response regulatory protein TtrR (ttrR) from Salmonella typhimurium (strain LT2 / SGSC1412 / ATCC 700720).